Consider the following 449-residue polypeptide: MKMNINKACDLKSISVFPPNLRRSAEPQASQQLRSQQSQQSFSQGPSSSQRGCGGFSQMTQSSIDELLINDQRFSSQERDLSLKKVSSCLPPINHKREDSQLVASRSSSGLSRRWSSASIGESKSQISEELEQRFGMMETSLSRFGMMLDSIQSDIMQANRGTKEVFLETERIQQKLTLQDTSLQQLRKEQADSKASLDGGVKFILEEFSKDPNQEKLQKILQMLTTIPEQVETALQKIQREICHTFTREIQVLASLRTPEPRVRVPTAPQVKAKENLPEQRGQAAKVLTSLKMPEPRVQVPAAPQAKENFPEQRGPVAKSNSFCNTTLKTKQPQFPRNPNDASARAVKPYLSPKIQVGCWKTVKPEKSNFKKRATRKPVKSESTRTQFEQCSVVIDSDEEDIDGGFSCLINENTRGTNFEWDAEKETERILRTARRTKRKFGNPIIIN.

Residues 21 to 56 (LRRSAEPQASQQLRSQQSQQSFSQGPSSSQRGCGGF) form a disordered region. The segment covering 28–50 (QASQQLRSQQSQQSFSQGPSSSQ) has biased composition (low complexity). Residues 437 to 441 (RTKRK) carry the Nuclear localization signal motif.

In terms of assembly, interacts with PRD1; this interaction facilitates a binding to DFO.

Its subcellular location is the nucleus. Involved in DNA cleavage that forms the double-strand breaks (DSB) that initiate meiotic recombination. The polypeptide is Putative recombination initiation defects 3 (Arabidopsis thaliana (Mouse-ear cress)).